A 500-amino-acid chain; its full sequence is Glycerol kinase (500 aa).

Thr-13 contacts ADP. Residues Thr-13, Thr-14, and Ser-15 each contribute to the ATP site. A sn-glycerol 3-phosphate-binding site is contributed by Thr-13. ADP is bound at residue Arg-17. Sn-glycerol 3-phosphate contacts are provided by Arg-83, Glu-84, Tyr-135, and Asp-244. Glycerol contacts are provided by Arg-83, Glu-84, Tyr-135, Asp-244, and Gln-245. 2 residues coordinate ADP: Thr-266 and Gly-309. The ATP site is built by Thr-266, Gly-309, Gln-313, and Gly-410. The ADP site is built by Gly-410 and Asn-414.

The protein belongs to the FGGY kinase family.

The catalysed reaction is glycerol + ATP = sn-glycerol 3-phosphate + ADP + H(+). Its pathway is polyol metabolism; glycerol degradation via glycerol kinase pathway; sn-glycerol 3-phosphate from glycerol: step 1/1. Inhibited by fructose 1,6-bisphosphate (FBP). Functionally, key enzyme in the regulation of glycerol uptake and metabolism. Catalyzes the phosphorylation of glycerol to yield sn-glycerol 3-phosphate. This Burkholderia vietnamiensis (strain G4 / LMG 22486) (Burkholderia cepacia (strain R1808)) protein is Glycerol kinase.